Reading from the N-terminus, the 220-residue chain is UPF0319 protein YccT (220 aa).

An N-terminal signal peptide occupies residues Met1 to Ala20.

The protein belongs to the UPF0319 family.

This is UPF0319 protein YccT from Escherichia fergusonii (strain ATCC 35469 / DSM 13698 / CCUG 18766 / IAM 14443 / JCM 21226 / LMG 7866 / NBRC 102419 / NCTC 12128 / CDC 0568-73).